The primary structure comprises 251 residues: MLAKRIIPCLDVRDGRVVKGINFEGLRDAGSILEQARFYNNELADELVFLDISASLESRKTTLEEVLKVSGEVFIPLTVGGGINSVERAKEVFLHGADKVSVNTAAVNNPELISRIAEKYGSQAVVVAVDIKKIGDRYIVHTHSGKQPTEYEALEWALKVQELGAGEILLTSMDRDGTKEGYDNESLALISTSVHIPVIASGGAGSLEHLYDGFTKGRADAALAASIFHFRQHSIREAKQYLHDRGITVRL.

Residues Asp11 and Asp130 contribute to the active site.

The protein belongs to the HisA/HisF family. Heterodimer of HisH and HisF.

Its subcellular location is the cytoplasm. The catalysed reaction is 5-[(5-phospho-1-deoxy-D-ribulos-1-ylimino)methylamino]-1-(5-phospho-beta-D-ribosyl)imidazole-4-carboxamide + L-glutamine = D-erythro-1-(imidazol-4-yl)glycerol 3-phosphate + 5-amino-1-(5-phospho-beta-D-ribosyl)imidazole-4-carboxamide + L-glutamate + H(+). The protein operates within amino-acid biosynthesis; L-histidine biosynthesis; L-histidine from 5-phospho-alpha-D-ribose 1-diphosphate: step 5/9. Its function is as follows. IGPS catalyzes the conversion of PRFAR and glutamine to IGP, AICAR and glutamate. The HisF subunit catalyzes the cyclization activity that produces IGP and AICAR from PRFAR using the ammonia provided by the HisH subunit. The polypeptide is Imidazole glycerol phosphate synthase subunit HisF (Chlorobium phaeovibrioides (strain DSM 265 / 1930) (Prosthecochloris vibrioformis (strain DSM 265))).